The following is a 241-amino-acid chain: Putative inactive serine protease 58 (241 aa).

Positions methionine 1 to alanine 17 are cleaved as a signal peptide. In terms of domain architecture, Peptidase S1 spans tyrosine 18 to lysine 239. An intrachain disulfide couples cysteine 41 to cysteine 57. Active-site charge relay system residues include histidine 56 and aspartate 101. 3 disulfides stabilise this stretch: cysteine 133/cysteine 201, cysteine 165/cysteine 180, and cysteine 191/cysteine 215. A glycan (N-linked (GlcNAc...) asparagine) is linked at asparagine 156.

It belongs to the peptidase S1 family.

Its subcellular location is the secreted. It catalyses the reaction Preferential cleavage: Arg-|-Xaa, Lys-|-Xaa.. The polypeptide is Putative inactive serine protease 58 (Prss58) (Mus musculus (Mouse)).